The following is a 90-amino-acid chain: Small ribosomal subunit protein uS15c (90 aa).

Belongs to the universal ribosomal protein uS15 family. In terms of assembly, part of the 30S ribosomal subunit.

The protein resides in the plastid. The protein localises to the chloroplast. The protein is Small ribosomal subunit protein uS15c (rps15) of Dioscorea elephantipes (Elephant's foot yam).